A 259-amino-acid polypeptide reads, in one-letter code: Deoxyribose-phosphate aldolase (259 aa).

Asp-102 functions as the Proton donor/acceptor in the catalytic mechanism. Lys-167 serves as the catalytic Schiff-base intermediate with acetaldehyde. The active-site Proton donor/acceptor is Lys-201.

The protein belongs to the DeoC/FbaB aldolase family. DeoC type 2 subfamily.

Its subcellular location is the cytoplasm. The enzyme catalyses 2-deoxy-D-ribose 5-phosphate = D-glyceraldehyde 3-phosphate + acetaldehyde. Its pathway is carbohydrate degradation; 2-deoxy-D-ribose 1-phosphate degradation; D-glyceraldehyde 3-phosphate and acetaldehyde from 2-deoxy-alpha-D-ribose 1-phosphate: step 2/2. Its function is as follows. Catalyzes a reversible aldol reaction between acetaldehyde and D-glyceraldehyde 3-phosphate to generate 2-deoxy-D-ribose 5-phosphate. The sequence is that of Deoxyribose-phosphate aldolase from Enterobacter sp. (strain 638).